Consider the following 147-residue polypeptide: Calcium-regulated heat stable protein 1 (147 aa).

Residues 1–12 show a composition bias toward pro residues; sequence MSSEPPPPPQPP. The interval 1–49 is disordered; the sequence is MSSEPPPPPQPPTHQTSIGLLDTPRARDRSPSPLRGNVVPSPLPTRRTR. Ser2 carries the N-acetylserine modification. Phosphoserine occurs at positions 30, 32, and 41. Residue Thr45 is modified to Phosphothreonine. Residues Ser52 and Ser58 each carry the phosphoserine modification. The CSD domain maps to 62–129; it reads VYKGVCKCFC…KLQAVEVVIT (68 aa). 2 positions are modified to phosphoserine: Ser146 and Ser147.

In terms of assembly, homodimer. Interacts with STYX. In terms of processing, can be phosphorylated by DYRK2 (in vitro). Dephosphorylated by calcineurin in a Ca(2+) dependent manner, and probably by PP2A or PP4 serine phosphatases in cAMP- and PKC-mediated pathways. In terms of tissue distribution, widely expressed.

It is found in the cytoplasm. Its subcellular location is the P-body. The protein localises to the cytoplasmic granule. Functionally, binds mRNA and regulates the stability of target mRNA. The polypeptide is Calcium-regulated heat stable protein 1 (Carhsp1) (Rattus norvegicus (Rat)).